A 459-amino-acid polypeptide reads, in one-letter code: Heat stress transcription factor A-4d (459 aa).

A coiled-coil region spans residues 127–189 (AESERRELEE…QKNIVASLCE (63 aa)). The tract at residues 141 to 191 (LKYEKSILVADLQRQNQQQYVINWQMQAMEGRLVAMEQRQKNIVASLCEML) is hydrophobic repeat HR-A/B. The short motif at 209 to 213 (SKKRR) is the Nuclear localization signal element. Over residues 364 to 388 (YPTQADVNSEIASSTDTSQDGTSET) the composition is skewed to polar residues. The interval 364-398 (YPTQADVNSEIASSTDTSQDGTSETEASHGPTNDV) is disordered. Positions 397–406 (DVFWERFLTE) match the AHA motif.

The protein belongs to the HSF family. Class A subfamily. Homotrimer. Post-translationally, exhibits temperature-dependent phosphorylation.

It localises to the nucleus. Transcriptional regulator that specifically binds DNA of heat shock promoter elements (HSE). The protein is Heat stress transcription factor A-4d (HSFA4D) of Oryza sativa subsp. japonica (Rice).